Reading from the N-terminus, the 475-residue chain is tRNA-2-methylthio-N(6)-dimethylallyladenosine synthase (475 aa).

The segment at 1–21 is disordered; that stretch reads MTTAPTSPALPASSDTAPTGP. Positions 24–145 constitute an MTTase N-terminal domain; the sequence is RGLHVITWGC…LPEMVARAAR (122 aa). 6 residues coordinate [4Fe-4S] cluster: Cys33, Cys69, Cys108, Cys186, Cys190, and Cys193. Residues 172 to 404 enclose the Radical SAM core domain; that stretch reads TQGNLTAFLT…QALLREQQDA (233 aa). One can recognise a TRAM domain in the interval 407–469; the sequence is ADMVGTVQEI…TNSLGGTLIR (63 aa).

This sequence belongs to the methylthiotransferase family. MiaB subfamily. In terms of assembly, monomer. The cofactor is [4Fe-4S] cluster.

The protein localises to the cytoplasm. It catalyses the reaction N(6)-dimethylallyladenosine(37) in tRNA + (sulfur carrier)-SH + AH2 + 2 S-adenosyl-L-methionine = 2-methylsulfanyl-N(6)-dimethylallyladenosine(37) in tRNA + (sulfur carrier)-H + 5'-deoxyadenosine + L-methionine + A + S-adenosyl-L-homocysteine + 2 H(+). Catalyzes the methylthiolation of N6-(dimethylallyl)adenosine (i(6)A), leading to the formation of 2-methylthio-N6-(dimethylallyl)adenosine (ms(2)i(6)A) at position 37 in tRNAs that read codons beginning with uridine. This Gluconobacter oxydans (strain 621H) (Gluconobacter suboxydans) protein is tRNA-2-methylthio-N(6)-dimethylallyladenosine synthase.